We begin with the raw amino-acid sequence, 451 residues long: 12S seed storage protein CRD (451 aa).

A signal peptide spans methionine 1–alanine 25. Intrachain disulfides connect cysteine 36/cysteine 69 and cysteine 112/cysteine 277. A Phosphoserine modification is found at serine 39. Cupin type-1 domains lie at asparagine 42–lysine 234 and glutamate 283–lysine 432. At threonine 115 the chain carries Phosphothreonine. Phosphoserine is present on serine 302. Phosphothreonine is present on threonine 396. Position 437 is a phosphoserine (serine 437).

This sequence belongs to the 11S seed storage protein (globulins) family. In terms of assembly, hexamer; each subunit is composed of an acidic and a basic chain derived from a single precursor and linked by a disulfide bond. Ubiquitinated. In terms of processing, proteolytically processed during seed maturation at a conserved Asn-Gly peptide bond by an asparaginyl endopeptidase to produce two mature polypeptides referred to as alpha and beta subunits that are joined together by a disulfide bond. Post-translationally, phosphorylated in seeds on some Tyr residues in response to abscisic acid (ABA). As to expression, accumulates in seeds 8 days after anthesis.

It is found in the protein storage vacuole. Its function is as follows. Seed storage protein. This chain is 12S seed storage protein CRD (CRD), found in Arabidopsis thaliana (Mouse-ear cress).